Here is a 122-residue protein sequence, read N- to C-terminus: Large ribosomal subunit protein uL14 (122 aa).

It belongs to the universal ribosomal protein uL14 family. As to quaternary structure, part of the 50S ribosomal subunit. Forms a cluster with proteins L3 and L19. In the 70S ribosome, L14 and L19 interact and together make contacts with the 16S rRNA in bridges B5 and B8.

Its function is as follows. Binds to 23S rRNA. Forms part of two intersubunit bridges in the 70S ribosome. The chain is Large ribosomal subunit protein uL14 from Clostridium tetani (strain Massachusetts / E88).